The sequence spans 113 residues: DNA-binding protein PTO0204 (113 aa).

It belongs to the PDCD5 family.

The polypeptide is DNA-binding protein PTO0204 (Picrophilus torridus (strain ATCC 700027 / DSM 9790 / JCM 10055 / NBRC 100828 / KAW 2/3)).